The chain runs to 260 residues: Manganese transport system ATP-binding protein MntA (260 aa).

An ABC transporter domain is found at 10-245 (ISVDGVSVTY…NLELTFGGLP (236 aa)). 43–50 (GPNGSGKS) lines the ATP pocket.

The protein belongs to the ABC transporter superfamily.

Part of an ATP-driven transport system for manganese. The chain is Manganese transport system ATP-binding protein MntA (mntA) from Synechocystis sp. (strain ATCC 27184 / PCC 6803 / Kazusa).